The chain runs to 415 residues: MPETNPSLPSWLNRGMADLFPAGEPSDVDQSLAARLAAAEAEGRPLRVKLGIDPTGSNIHLGHSILFRKLRAFQDAGHIAVLIIGDFTARIGDPTGKSATRVQLSKNDVAVNASTYLRQLGQDQPKETALLDFETPGRLEVRYNSEWLEGMDLPAVIGLLGTGTVGQMLAKEDFSNRYNSGTPIALHEFLYPLLQGYDSVAVNADVELGGTDQKFNVAMGRDLQRHFGRGTQFGLLLPILVGLDGAQKMSKTLGNTVGLEDDPLSMYSKLEKVGDTAINDYVTLLTDLNVEALPENPREKQKAMALAVTATRHGTDAAAKAQLDAGNLVGGAGDASADVPEASLLAVNFPAKAFYLMSAVGICASSSEARRQIKGGAARLDGEKITDPNQEFASAAELDGRVLQLGKKTFRRLTA.

A 'HIGH' region motif is present at residues 54-63 (PTGSNIHLGH). Positions 248–252 (KMSKT) match the 'KMSKS' region motif. Residue lysine 251 coordinates ATP. One can recognise an S4 RNA-binding domain in the interval 351-415 (AKAFYLMSAV…GKKTFRRLTA (65 aa)).

This sequence belongs to the class-I aminoacyl-tRNA synthetase family. TyrS type 2 subfamily. Homodimer.

The protein resides in the cytoplasm. The enzyme catalyses tRNA(Tyr) + L-tyrosine + ATP = L-tyrosyl-tRNA(Tyr) + AMP + diphosphate + H(+). Its function is as follows. Catalyzes the attachment of tyrosine to tRNA(Tyr) in a two-step reaction: tyrosine is first activated by ATP to form Tyr-AMP and then transferred to the acceptor end of tRNA(Tyr). The sequence is that of Tyrosine--tRNA ligase from Synechococcus sp. (strain CC9902).